Reading from the N-terminus, the 92-residue chain is Bombyxin A-3 (92 aa).

The N-terminal stretch at 1–19 (MKILLAIALMLSTVMWVST) is a signal peptide. Glutamine 20 bears the Pyrrolidone carboxylic acid mark. Cystine bridges form between cysteine 29/cysteine 79, cysteine 41/cysteine 92, and cysteine 78/cysteine 83. A propeptide spans 50-70 (SDAQYVSYGSAWLMPYSEGRG) (c peptide like).

This sequence belongs to the insulin family. Heterodimer of a B chain and an A chain linked by two disulfide bonds.

Its subcellular location is the secreted. Its function is as follows. Brain peptide responsible for activation of prothoracic glands to produce ecdysone in insects. The polypeptide is Bombyxin A-3 (BBXA3) (Bombyx mori (Silk moth)).